A 3961-amino-acid chain; its full sequence is Hybrid PKS-NRPS synthetase phm1 (3961 aa).

A Ketosynthase family 3 (KS3) domain is found at 4–436 (SEPIAIIGSA…GTNAHAIVEA (433 aa)). Residues C178, H317, and H356 each act as for beta-ketoacyl synthase activity in the active site. The interval 541–867 (VFTGQGAQWP…RSKNDILELS (327 aa)) is malonyl-CoA:ACP transacylase (MAT) domain. The segment at 933–1068 (HPILGKRCLE…GTVTVTLAEP (136 aa)) is N-terminal hotdog fold. The dehydratase (DH) domain stretch occupies residues 933–1234 (HPILGKRCLE…LELVPFTAAR (302 aa)). The region spanning 933–1236 (HPILGKRCLE…LVPFTAARPE (304 aa)) is the PKS/mFAS DH domain. H966 (proton acceptor; for dehydratase activity) is an active-site residue. A C-terminal hotdog fold region spans residues 1083–1236 (MTEIEVDRFY…LVPFTAARPE (154 aa)). The active-site Proton donor; for dehydratase activity is D1143. The interval 1376 to 1569 (FDFYDQGLGL…GFGGIDTSTP (194 aa)) is methyltransferase (MT) domain. Positions 2106 to 2277 (TYLLIGMSGQ…GVPGSAISIS (172 aa)) are ketoreductase (KR) domain. The 79-residue stretch at 2386–2464 (QAATIIKDGF…ELLQEAMDRT (79 aa)) folds into the Carrier 1 domain. S2424 is subject to O-(pantetheine 4'-phosphoryl)serine. The segment at 2482–2527 (PVTNTATPPPEVQVTGSASDSSRSLTPDGLSTSRPSTPVRTPMTEI) is disordered. Positions 2495–2520 (VTGSASDSSRSLTPDGLSTSRPSTPV) are enriched in polar residues. Residues 2553–2993 (PMSYGQARFW…DLPRWAGADV (441 aa)) are condensation (C) domain. An adenylation (A) (KR) domain region spans residues 3019–3424 (QMIGTYASKP…DGALFVHGRI (406 aa)). The region spanning 3542-3616 (ANMEGRVAAL…GMARHVRAAF (75 aa)) is the Carrier 2 domain. S3576 is subject to O-(pantetheine 4'-phosphoryl)serine. The reductase (RED) domain stretch occupies residues 3725-3871 (ITDIVFHCAA…VRPVSDVATT (147 aa)).

In the C-terminal section; belongs to the NRP synthetase family.

It participates in secondary metabolite biosynthesis. In terms of biological role, hybrid PKS-NRPS synthetase; part of the gene cluster that mediates the biosynthesis of the trans-fused decalin-containing tetramic acid phomasetin, the stereochemical opposite of the HIV-1 integrase inhibitor equisetin. The PKS module of phm1 together with the enoylreductase phm4 catalyze the formation of the polyketide unit which is then conjugated to L-serine by the condensation domain of the phm1 NRPS module. Activity of the Dieckmann cyclase domain (RED) of phm1 results in release of the Dieckmann product intermediate. The Diels-Alderase phm7 then uses the Dieckmann product of phm1 as substrate and catalyzes the Diels-Alder cycloaddition to form the decalin ring of N-desmethylphomasetin. N-desmethylphomasetin is further methylated to phomasetin by the methyltransferase phm5. This chain is Hybrid PKS-NRPS synthetase phm1, found in Pyrenochaetopsis sp.